The sequence spans 249 residues: 2,3-bisphosphoglycerate-dependent phosphoglycerate mutase (249 aa).

Substrate-binding positions include 11–18 (RHGNSEWN), 24–25 (TG), Arg-63, 90–93 (ERHY), Lys-101, 117–118 (RR), and 185–186 (GN). The Tele-phosphohistidine intermediate role is filled by His-12. Glu-90 serves as the catalytic Proton donor/acceptor.

Belongs to the phosphoglycerate mutase family. BPG-dependent PGAM subfamily.

The enzyme catalyses (2R)-2-phosphoglycerate = (2R)-3-phosphoglycerate. The protein operates within carbohydrate degradation; glycolysis; pyruvate from D-glyceraldehyde 3-phosphate: step 3/5. In terms of biological role, catalyzes the interconversion of 2-phosphoglycerate and 3-phosphoglycerate. This is 2,3-bisphosphoglycerate-dependent phosphoglycerate mutase from Leifsonia xyli subsp. xyli (strain CTCB07).